A 197-amino-acid polypeptide reads, in one-letter code: RSDPTQIEVKLFNRWSFDDVQLSDVSLIDYIGVVPSKHATYVPHTAGRYSVKRFRKAQCPIVERLTNSLMMHGRNNGKKLMAVRIIKHAMEIIHLLTDQNPIQVIVDAVVNSGPREDATRIGSAGVVRRQAVDISPLRRVNQAIYLLTTGAREAAFRNIKSIAECLADELINAAKGSSNSYAIKKKDEIERVAKANR.

It belongs to the universal ribosomal protein uS7 family.

This Cicer arietinum (Chickpea) protein is Small ribosomal subunit protein uS7 (RPS5).